A 217-amino-acid chain; its full sequence is Ribulose-phosphate 3-epimerase (217 aa).

Substrate is bound at residue S7. Residues H32, D34, and H65 each coordinate a divalent metal cation. D34 functions as the Proton acceptor in the catalytic mechanism. Residues H65, 141–144, 175–177, and 197–198 each bind substrate; these read GFGG, DGG, and GS. D175 contributes to the a divalent metal cation binding site. Residue D175 is the Proton donor of the active site.

The protein belongs to the ribulose-phosphate 3-epimerase family. Requires a divalent metal cation as cofactor.

It catalyses the reaction D-ribulose 5-phosphate = D-xylulose 5-phosphate. Its pathway is carbohydrate degradation. Catalyzes the reversible epimerization of D-ribulose 5-phosphate to D-xylulose 5-phosphate. The sequence is that of Ribulose-phosphate 3-epimerase from Bacillus subtilis (strain 168).